The following is a 457-amino-acid chain: Argininosuccinate lyase (457 aa).

The protein belongs to the lyase 1 family. Argininosuccinate lyase subfamily.

Its subcellular location is the cytoplasm. It carries out the reaction 2-(N(omega)-L-arginino)succinate = fumarate + L-arginine. It functions in the pathway amino-acid biosynthesis; L-arginine biosynthesis; L-arginine from L-ornithine and carbamoyl phosphate: step 3/3. The protein is Argininosuccinate lyase of Klebsiella pneumoniae subsp. pneumoniae (strain ATCC 700721 / MGH 78578).